A 95-amino-acid chain; its full sequence is Fatty acid-binding protein, liver (95 aa).

An N6-succinyllysine mark is found at Lys-13 and Lys-18. At Ser-21 the chain carries Phosphoserine. Lys-28 bears the N6-succinyllysine mark. Thr-33 is subject to Phosphothreonine. Phosphoserine is present on Ser-38. N6-succinyllysine occurs at positions 39, 47, and 59. A Phosphoserine modification is found at Ser-69. Lys-90 is subject to N6-succinyllysine.

It belongs to the calycin superfamily. Fatty-acid binding protein (FABP) family. In terms of assembly, monomer.

The protein localises to the cytoplasm. This protein binds free fatty acids and their coenzyme A derivatives, bilirubin, and some other small molecules in the cytoplasm; it may be involved in intracellular lipid transport. The sequence is that of Fatty acid-binding protein, liver (FABP1) from Chaetophractus villosus (South American armadillo).